A 413-amino-acid chain; its full sequence is Probable isoleucine--tRNA ligase, mitochondrial (413 aa).

The short motif at 298–302 (KMSKS) is the 'KMSKS' region element. Lys-301 is an ATP binding site.

This sequence belongs to the class-I aminoacyl-tRNA synthetase family.

It is found in the mitochondrion matrix. The catalysed reaction is tRNA(Ile) + L-isoleucine + ATP = L-isoleucyl-tRNA(Ile) + AMP + diphosphate. The chain is Probable isoleucine--tRNA ligase, mitochondrial from Ciona intestinalis (Transparent sea squirt).